The sequence spans 309 residues: Malate dehydrogenase (309 aa).

NAD(+) is bound by residues 9 to 14 (GAGFVG) and aspartate 33. Arginine 82 and arginine 88 together coordinate substrate. NAD(+)-binding positions include asparagine 95 and 118–120 (VNN). Substrate is bound by residues asparagine 120 and arginine 151. The active-site Proton acceptor is histidine 175.

Belongs to the LDH/MDH superfamily. MDH type 3 family.

The catalysed reaction is (S)-malate + NAD(+) = oxaloacetate + NADH + H(+). Its function is as follows. Catalyzes the reversible oxidation of malate to oxaloacetate. This chain is Malate dehydrogenase, found in Chloroflexus aurantiacus (strain ATCC 29364 / DSM 637 / Y-400-fl).